A 254-amino-acid polypeptide reads, in one-letter code: Phosphoribosylaminoimidazole-succinocarboxamide synthase (254 aa).

Belongs to the SAICAR synthetase family.

It carries out the reaction 5-amino-1-(5-phospho-D-ribosyl)imidazole-4-carboxylate + L-aspartate + ATP = (2S)-2-[5-amino-1-(5-phospho-beta-D-ribosyl)imidazole-4-carboxamido]succinate + ADP + phosphate + 2 H(+). It functions in the pathway purine metabolism; IMP biosynthesis via de novo pathway; 5-amino-1-(5-phospho-D-ribosyl)imidazole-4-carboxamide from 5-amino-1-(5-phospho-D-ribosyl)imidazole-4-carboxylate: step 1/2. This is Phosphoribosylaminoimidazole-succinocarboxamide synthase from Brucella anthropi (strain ATCC 49188 / DSM 6882 / CCUG 24695 / JCM 21032 / LMG 3331 / NBRC 15819 / NCTC 12168 / Alc 37) (Ochrobactrum anthropi).